The chain runs to 857 residues: Protein sip-5 (857 aa).

6 disordered regions span residues 1–81 (MGNA…ARRL), 157–231 (GLPI…FKPT), 384–416 (SESS…APNV), 466–517 (FGRR…GNRR), 545–747 (KAEK…PMFN), and 763–857 (HAGK…QVTL). 2 stretches are compositionally biased toward basic and acidic residues: residues 7–16 (KESRGDDSGR) and 36–48 (ESSR…RHDL). Residues 49–61 (TGLLGRAAGGSSS) show a composition bias toward low complexity. The span at 62-81 (HADERHERKETKQEREARRL) shows a compositional bias: basic and acidic residues. 2 stretches are compositionally biased toward polar residues: residues 179 to 191 (ASPT…TNHL) and 199 to 208 (SLSTASEHST). Low complexity-rich tracts occupy residues 209–230 (SNAG…PFKP), 384–394 (SESSVNSGSLS), and 476–504 (SASA…TANT). Basic and acidic residues predominate over residues 545–572 (KAEKEEQKEAKKREKEREKAEKKAEKAA). Low complexity-rich tracts occupy residues 586–604 (SRSG…PGLS) and 621–645 (ASVA…ALAP). The segment covering 648–657 (STKDKGKAVD) has biased composition (basic and acidic residues). Residues 688-697 (SSASSASSSA) are compositionally biased toward low complexity. The span at 698–712 (VESNQGSYVPPSNLQ) shows a compositional bias: polar residues. Residues 783 to 799 (ETAKSGEGAGEHVEHVL) are compositionally biased toward basic and acidic residues. 2 stretches are compositionally biased toward polar residues: residues 800–838 (DSQT…STAS) and 845–857 (NETT…QVTL).

It belongs to the SIP5 family.

It is found in the cytoplasm. Functionally, may negatively regulate the snf-1 kinase. The sequence is that of Protein sip-5 (sip-5) from Neurospora crassa (strain ATCC 24698 / 74-OR23-1A / CBS 708.71 / DSM 1257 / FGSC 987).